Consider the following 184-residue polypeptide: MDGFFWKTWLVVAALAIGGTSSLPHKPLTYEEAVDLAVSTYNGKSGEESLYRLLEAVPPPKWDPLSESNQELNLTIKETVCLVAEERSLEECDFQDDGAVMGCTGYFFFGESPPVLVLTCEPLGEDEEQNQEEEEEEEKEEDEKDQPRRVKRFKKFFRKLKKSVKKRVKKFFKKPRVIGVTIPF.

A signal peptide spans 1 to 22 (MDGFFWKTWLVVAALAIGGTSS). Positions 23 to 150 (LPHKPLTYEE…EDEKDQPRRV (128 aa)) are excised as a propeptide. Disulfide bonds link Cys81–Cys92 and Cys103–Cys120. The segment covering 125 to 144 (EDEEQNQEEEEEEEKEEDEK) has biased composition (acidic residues). A disordered region spans residues 125-147 (EDEEQNQEEEEEEEKEEDEKDQP).

This sequence belongs to the cathelicidin family. In terms of tissue distribution, expressed by the venom gland.

It is found in the secreted. Its subcellular location is the target cell membrane. Functionally, potent antimicrobial peptide against most of Gram-negative bacteria, some Gram-positive bacteria (Bacillus) and some fungi (C.albicans, P.pastoris, A.terreus, A.nidulans, and C.globosum). Adopts an amphipathic alpha helical conformation, that may allow to partition into the target membrane. No hemolytic and cytotoxic activities have been observed on mammalian cells. This is Cathelicidin-related peptide Pt_CRAMP2 from Pseudonaja textilis (Eastern brown snake).